The following is a 445-amino-acid chain: 6-phosphogluconate dehydrogenase, decarboxylating (445 aa).

NADP(+) is bound by residues 1–4 (AVMG), 22–24 (NRS), 63–65 (VKA), and asparagine 91. Substrate-binding positions include asparagine 91 and 117–119 (SGG). Lysine 172 serves as the catalytic Proton acceptor. Residue 175-176 (HN) participates in substrate binding. The active-site Proton donor is the glutamate 179. 5 residues coordinate substrate: tyrosine 180, lysine 249, arginine 276, arginine 434, and histidine 440.

It belongs to the 6-phosphogluconate dehydrogenase family. In terms of assembly, homodimer.

The enzyme catalyses 6-phospho-D-gluconate + NADP(+) = D-ribulose 5-phosphate + CO2 + NADPH. It participates in carbohydrate degradation; pentose phosphate pathway; D-ribulose 5-phosphate from D-glucose 6-phosphate (oxidative stage): step 3/3. Its function is as follows. Catalyzes the oxidative decarboxylation of 6-phosphogluconate to ribulose 5-phosphate and CO(2), with concomitant reduction of NADP to NADPH. In Raoultella planticola (Klebsiella planticola), this protein is 6-phosphogluconate dehydrogenase, decarboxylating (gnd).